We begin with the raw amino-acid sequence, 313 residues long: Serine/threonine-protein kinase SZE1 (313 aa).

The N-myristoyl glycine moiety is linked to residue Gly-2. In terms of domain architecture, Protein kinase spans 43–311; it reads MELGESLGYI…EVLDNLNAIA (269 aa). Residues 49–57 and Lys-71 contribute to the ATP site; that span reads LGYINPKTL.

It belongs to the protein kinase superfamily. Ser/Thr protein kinase family. Component of an immune signaling complex made of, at least, SZE1, BKN2/SZE2, ZAR1 and ZED1. Interacts directly with ZED1, ZAR1 and Pseudomonas syringae HOPZ1A at the plasma membrane. Post-translationally, N-terminal myristoylation is critical for plasma membrane localization and implication in defense responses. In terms of processing, autophosphorylated. In terms of tissue distribution, expressed in roots, seedlings, rosette leaves, floral organs, siliques and inflorescence stems.

Its subcellular location is the cell membrane. It catalyses the reaction L-seryl-[protein] + ATP = O-phospho-L-seryl-[protein] + ADP + H(+). The catalysed reaction is L-threonyl-[protein] + ATP = O-phospho-L-threonyl-[protein] + ADP + H(+). Together with BKN2/SZE2 and ZED1, required for effector-triggered immunity (e.g. Pseudomonas syringae effector type III HopZ1a) via the activation of ZAR1, thus being essential for resistance against P.syringae pv. tomato DC3000 expressing HopZ1a. This is Serine/threonine-protein kinase SZE1 from Arabidopsis thaliana (Mouse-ear cress).